The primary structure comprises 77 residues: Chaplin-H (77 aa).

The signal sequence occupies residues 1–25 (MLKKVVAAAAATGGLVLAGAGMAVA). Positions 36–76 (SPGVLSGNVVQVPVHVPVNVCGNTISVIGLLNPAFGNVCIN) constitute a Chaplin domain. 2 forms amyloid fibrils in vitro regions span residues 38–54 (GVLS…VPVN) and 57–72 (GNTI…AFGN). Cysteine 56 and cysteine 74 form a disulfide bridge.

The protein belongs to the chaplin family. Short chaplin subfamily. As to quaternary structure, homodimer; disulfide linked. About 10% of ChpH isolated from cell wall forms disulfide-bonded homodimers.

It is found in the cell surface. The protein resides in the secreted. The protein localises to the cell wall. It localises to the fimbrium. Functionally, one of 8 partially redundant surface-active proteins required for efficient formation of aerial mycelium; the short chaplins assemble into a hydrophobic, amyloidal fibrillar surface layer that envelopes and protects aerial hyphae and spores, presumably anchored to the long chaplins. Chaplins have an overlapping function with the surface-active SapB peptide; chaplins are essential on minimal medium while on rich medium both chaplins and SapB are required for efficient aerial hyphae formation. Chaplins are also involved in cell attachment to a hydrophobic surface. Forms amyloid fibrils in vitro probably composed of stacked beta-sheets. A small chaplin extract (ChpD, ChpE, ChpF, ChpG and ChpH) self-assembles into 2 different amyloids; small fibrils at the air-water interface form an amphipathic membrane that resembles spore-surface structures involved in aerial hyphae formation, and hydrophilic fibrils in solution that resemble the fibers that attach cells to a hydrophobic surface. At the air-water interface the hydrophilic surface is in contact with water (probably equivalent to the peptidoglycan layer), while the hydrophobic face is exposed to the air, making the surface of the aerial hyphae hydrophobic. A minimal chaplin strain capable of forming aerial mycelium/hyphae on minimal medium contains ChpC, ChpE and ChpH. The strain also has restored rodlet formation on the hyphae surface. A small chaplin extract applied to a chaplin-deficient strain restores aerial hyphae formation. The small chaplin extract forms an amyloid-like structure similar to that seen on the surface of cells without rodlets (rdlA-rdlB deletions), and is highly surface active, reducing surface tension from 72 to 26 mJ/m(2), which probably allows escape of hyphae from an aqueous environment into air. The sequence is that of Chaplin-H from Streptomyces coelicolor (strain ATCC BAA-471 / A3(2) / M145).